Consider the following 144-residue polypeptide: Large ribosomal subunit protein uL15 (144 aa).

The segment at 1-59 (MHLNTLAPAPGAKKSSKRVGRGMGSGLGKTGGRGHKGQKSRSGGSVKPGFEGGQMPIQR) is disordered. The segment covering 21-31 (RGMGSGLGKTG) has biased composition (gly residues).

This sequence belongs to the universal ribosomal protein uL15 family. Part of the 50S ribosomal subunit.

Its function is as follows. Binds to the 23S rRNA. The protein is Large ribosomal subunit protein uL15 of Pseudoalteromonas atlantica (strain T6c / ATCC BAA-1087).